A 387-amino-acid chain; its full sequence is Galactokinase (387 aa).

36 to 39 contributes to the substrate binding site; that stretch reads EHTD. ATP contacts are provided by residues S70 and 125–131; that span reads GAGLSSS. Mg(2+) contacts are provided by S131 and E163. D175 functions as the Proton acceptor in the catalytic mechanism. Substrate is bound at residue Y227.

Belongs to the GHMP kinase family. GalK subfamily.

Its subcellular location is the cytoplasm. The enzyme catalyses alpha-D-galactose + ATP = alpha-D-galactose 1-phosphate + ADP + H(+). It participates in carbohydrate metabolism; galactose metabolism. Catalyzes the transfer of the gamma-phosphate of ATP to D-galactose to form alpha-D-galactose-1-phosphate (Gal-1-P). The chain is Galactokinase from Streptomyces coelicolor (strain ATCC BAA-471 / A3(2) / M145).